Reading from the N-terminus, the 293-residue chain is 3-methyl-2-oxobutanoate hydroxymethyltransferase (293 aa).

Residues 1–29 (MTAAHDRSENQPGRPGGETTAPYGSAPRR) form a disordered region. 2 residues coordinate Mg(2+): Asp-73 and Asp-112. Residues 73–74 (DS), Asp-112, and Lys-142 contribute to the 3-methyl-2-oxobutanoate site. Glu-144 is a binding site for Mg(2+). The active-site Proton acceptor is the Glu-210.

Belongs to the PanB family. Homodecamer; pentamer of dimers. Mg(2+) serves as cofactor.

It is found in the cytoplasm. It catalyses the reaction 3-methyl-2-oxobutanoate + (6R)-5,10-methylene-5,6,7,8-tetrahydrofolate + H2O = 2-dehydropantoate + (6S)-5,6,7,8-tetrahydrofolate. It participates in cofactor biosynthesis; (R)-pantothenate biosynthesis; (R)-pantoate from 3-methyl-2-oxobutanoate: step 1/2. Catalyzes the reversible reaction in which hydroxymethyl group from 5,10-methylenetetrahydrofolate is transferred onto alpha-ketoisovalerate to form ketopantoate. The polypeptide is 3-methyl-2-oxobutanoate hydroxymethyltransferase (Saccharopolyspora erythraea (strain ATCC 11635 / DSM 40517 / JCM 4748 / NBRC 13426 / NCIMB 8594 / NRRL 2338)).